Here is a 111-residue protein sequence, read N- to C-terminus: COX assembly mitochondrial protein (111 aa).

One can recognise a CHCH domain in the interval 39-82; it reads YKKCANFVQAMADCAKANGMKVFPTCDKQRDEMKSCLLFYQTDE. 2 short sequence motifs (cx9C motif) span residues 42–52 and 64–74; these read CANFVQAMADC and CDKQRDEMKSC. 2 disulfide bridges follow: Cys42–Cys74 and Cys52–Cys64.

It belongs to the CMC family.

It is found in the mitochondrion inner membrane. Its function is as follows. Required for mitochondrial cytochrome c oxidase (COX) assembly and respiration. Binds copper. May be involved in copper trafficking and distribution to mitochondrial COX and SOD1. In Saccharomyces cerevisiae (strain YJM789) (Baker's yeast), this protein is COX assembly mitochondrial protein (CMC1).